The primary structure comprises 137 residues: 14 kDa proline-rich protein DC2.15 (137 aa).

An N-terminal signal peptide occupies residues 1-25 (MGSKNSASVALFFTLNILFFALVSS). A disordered region spans residues 30–53 (PDPYKPKPKPTPKPTPTPYPSAGK). Pro residues predominate over residues 38–48 (KPTPKPTPTPY). The chain crosses the membrane as a helical span at residues 88–104 (LEGLVNLEAAVCLCTAI).

It localises to the membrane. May be connected with the initiation of embryogenesis or with the metabolic changes produced by the removal of auxins. This is 14 kDa proline-rich protein DC2.15 from Daucus carota (Wild carrot).